Here is a 305-residue protein sequence, read N- to C-terminus: NAD kinase (305 aa).

The active-site Proton acceptor is the Asp-88. Residues 88-89 (DG), Arg-93, 162-163 (NE), Lys-173, Asn-192, 203-208 (TAYSFS), and Gln-262 contribute to the NAD(+) site.

The protein belongs to the NAD kinase family. It depends on a divalent metal cation as a cofactor.

It localises to the cytoplasm. It catalyses the reaction NAD(+) + ATP = ADP + NADP(+) + H(+). Functionally, involved in the regulation of the intracellular balance of NAD and NADP, and is a key enzyme in the biosynthesis of NADP. Catalyzes specifically the phosphorylation on 2'-hydroxyl of the adenosine moiety of NAD to yield NADP. The protein is NAD kinase of Tropheryma whipplei (strain TW08/27) (Whipple's bacillus).